The following is a 255-amino-acid chain: Small ribosomal subunit protein uS2 (255 aa).

The interval 233–255 (DFVAEEAASEESLEELAEIVEGK) is disordered.

This sequence belongs to the universal ribosomal protein uS2 family.

This chain is Small ribosomal subunit protein uS2 (rpsB), found in Lactococcus lactis subsp. lactis (strain IL1403) (Streptococcus lactis).